We begin with the raw amino-acid sequence, 371 residues long: Palmitoyl-monogalactosyldiacylglycerol delta-7 desaturase, chloroplastic (371 aa).

A chloroplast-targeting transit peptide spans 1-67 (MASLLTKPKP…KGLKRDVTTA (67 aa)). Transmembrane regions (helical) follow at residues 103–123 (FGAV…PFQF) and 127–147 (AVSV…TLSF). A Histidine box-1 motif is present at residues 148–153 (HRNLSH). The Histidine box-2 signature appears at 185–189 (HRYHH). A helical membrane pass occupies residues 251-271 (ALAVALYAMGGFPFIVWGMGV). The Histidine box-3 signature appears at 317-321 (HNNHH).

Belongs to the fatty acid desaturase type 1 family. It depends on Fe(2+) as a cofactor. Highly expressed in young leaves. Low expression in roots.

It localises to the plastid. It is found in the chloroplast membrane. The enzyme catalyses a 1-acyl-2-hexadecanoyl-glycerolipid + 2 reduced [2Fe-2S]-[ferredoxin] + O2 + 2 H(+) = a 1-acyl-2-[(7Z)-hexadecenoyl]-glycerolipid + 2 oxidized [2Fe-2S]-[ferredoxin] + 2 H2O. It functions in the pathway lipid metabolism; oxylipin biosynthesis. It participates in lipid metabolism; polyunsaturated fatty acid biosynthesis. Its function is as follows. Fatty acid desaturase involved in the first desaturation step leading to the formation of hexadeca 7,10,13-trienoic acid (16:3(7Z,10Z,13Z)), the major functional components of thylakoid membranes. Required for chloroplast biogenesis at low temperature. Also indirectly involved in the production of the oxylipin dinor-oxo-phyto-dienoic acid implicated in wound signaling. This is Palmitoyl-monogalactosyldiacylglycerol delta-7 desaturase, chloroplastic from Arabidopsis thaliana (Mouse-ear cress).